A 307-amino-acid polypeptide reads, in one-letter code: Manganese-dependent inorganic pyrophosphatase (307 aa).

Mn(2+) is bound by residues His-7, Asp-11, Asp-13, Asp-66, His-88, and Asp-147.

Requires Mn(2+) as cofactor.

It is found in the cytoplasm. It catalyses the reaction diphosphate + H2O = 2 phosphate + H(+). The protein is Manganese-dependent inorganic pyrophosphatase (ppaC) of Methanocaldococcus jannaschii (strain ATCC 43067 / DSM 2661 / JAL-1 / JCM 10045 / NBRC 100440) (Methanococcus jannaschii).